A 261-amino-acid chain; its full sequence is 2-phytyl-1,4-beta-naphthoquinone methyltransferase, chloroplastic (261 aa).

Residues 1 to 30 constitute a chloroplast transit peptide; the sequence is MAALLGIVSPVTFTGKHPVNSRSRRRTVVK.

The protein belongs to the class I-like SAM-binding methyltransferase superfamily. MenG/UbiE family.

Its subcellular location is the plastid. The protein resides in the chloroplast. It catalyses the reaction demethylphylloquinol + S-adenosyl-L-methionine = phylloquinol + S-adenosyl-L-homocysteine + H(+). In terms of biological role, involved in the biosynthesis of phylloquinone (vitamin K1). Methyltransferase required for the conversion of 2-phytyl-1,4-beta-naphthoquinol to phylloquinol. The sequence is that of 2-phytyl-1,4-beta-naphthoquinone methyltransferase, chloroplastic from Arabidopsis thaliana (Mouse-ear cress).